A 110-amino-acid chain; its full sequence is BET1-like protein (110 aa).

The Cytoplasmic segment spans residues 1 to 85; sequence MADPWNRGHG…MVRSGRDNRK (85 aa). Residues 14 to 76 enclose the t-SNARE coiled-coil homology domain; the sequence is DMLDAENKRM…TGSVKRFSTM (63 aa). The helical; Anchor for type IV membrane protein transmembrane segment at 86–106 threads the bilayer; the sequence is ILCYVSVGLVVAFFLLYYLVS. The Lumenal segment spans residues 107 to 110; sequence RMQN.

Component of a SNARE complex consisting of stx5, ykt6, gosr2 and bet1l.

Its subcellular location is the golgi apparatus membrane. Functionally, vesicle SNARE required for targeting and fusion of retrograde transport vesicles with the Golgi complex. Required for the integrity of the Golgi complex. The chain is BET1-like protein (bet1l) from Danio rerio (Zebrafish).